The primary structure comprises 85 residues: MAQKKGGGSTRNGRDSQPKMLGVKAYGGQMVSAGSIIVRQRGTRFHAGTNVGMGRDHTLFALVDGTISFDVKGASNRKTVFVTPV.

Gly residues predominate over residues 1 to 10; it reads MAQKKGGGST. The interval 1 to 21 is disordered; it reads MAQKKGGGSTRNGRDSQPKML.

The protein belongs to the bacterial ribosomal protein bL27 family.

This Leptothrix cholodnii (strain ATCC 51168 / LMG 8142 / SP-6) (Leptothrix discophora (strain SP-6)) protein is Large ribosomal subunit protein bL27.